The chain runs to 635 residues: tRNA 5-methylaminomethyl-2-thiouridine biosynthesis bifunctional protein MnmC (635 aa).

A tRNA (mnm(5)s(2)U34)-methyltransferase region spans residues 1–231 (MPITPASLSF…KRQMLRGRYL (231 aa)). Residues 249–635 (IGAGVAGTSI…RPARTLRGED (387 aa)) are FAD-dependent cmnm(5)s(2)U34 oxidoreductase.

It in the N-terminal section; belongs to the methyltransferase superfamily. tRNA (mnm(5)s(2)U34)-methyltransferase family. In the C-terminal section; belongs to the DAO family. FAD is required as a cofactor.

Its subcellular location is the cytoplasm. The catalysed reaction is 5-aminomethyl-2-thiouridine(34) in tRNA + S-adenosyl-L-methionine = 5-methylaminomethyl-2-thiouridine(34) in tRNA + S-adenosyl-L-homocysteine + H(+). Functionally, catalyzes the last two steps in the biosynthesis of 5-methylaminomethyl-2-thiouridine (mnm(5)s(2)U) at the wobble position (U34) in tRNA. Catalyzes the FAD-dependent demodification of cmnm(5)s(2)U34 to nm(5)s(2)U34, followed by the transfer of a methyl group from S-adenosyl-L-methionine to nm(5)s(2)U34, to form mnm(5)s(2)U34. The protein is tRNA 5-methylaminomethyl-2-thiouridine biosynthesis bifunctional protein MnmC of Azoarcus sp. (strain BH72).